The following is a 661-amino-acid chain: SUMO-activating enzyme subunit 2 (661 aa).

ATP-binding positions include 29–34, Asp53, 61–64, Lys77, and 122–127; these read GAGGIG, NLNR, and DNISAR. Cys163 and Cys166 together coordinate Zn(2+). The active-site Glycyl thioester intermediate is Cys178. Residues Cys436 and Cys439 each coordinate Zn(2+). The tract at residues 545–661 is disordered; the sequence is KKQQQKEKDQ…SKKLKSNLQD (117 aa). The segment covering 548–563 has biased composition (basic and acidic residues); that stretch reads QQKEKDQKEGKTTTIE. Low complexity-rich tracts occupy residues 577 to 607 and 623 to 634; these read TSQTTTTTTTTTTTTESDNNSNNNKNNNNNN and SSTTTSSATPSI.

The protein belongs to the ubiquitin-activating E1 family. Heterodimer of sae1 and sae2. The complex binds sumo via sae2.

The protein localises to the nucleus. It participates in protein modification; protein sumoylation. In terms of biological role, the dimeric enzyme acts as an E1 ligase for sumo. It mediates ATP-dependent activation of sumo and formation of a thioester with a conserved cysteine residue on sae2. This is SUMO-activating enzyme subunit 2 (uba2) from Dictyostelium discoideum (Social amoeba).